Reading from the N-terminus, the 1615-residue chain is Regulating synaptic membrane exocytosis protein 1 (1615 aa).

Residues 1–26 (MSSAVGPRGPRPPTVPPPMQELPDLS) are disordered. Pro residues predominate over residues 9 to 20 (GPRPPTVPPPMQ). A RabBD domain is found at 22-205 (LPDLSHLTEE…TKSGAWFFGS (184 aa)). An FYVE-type zinc finger spans residues 133-193 (KDDAPTCGIC…VCNLCRKQQE (61 aa)). Positions 139, 142, 155, 158, 163, 166, 185, and 188 each coordinate Zn(2+). The tract at residues 205-569 (SGPQQPSQDG…CEDVELESES (365 aa)) is disordered. Positions 206 to 222 (GPQQPSQDGTLSDTATG) are enriched in polar residues. Residues 227-240 (VPREKKARLQERSR) show a composition bias toward basic and acidic residues. A compositionally biased stretch (polar residues) spans 241-256 (SQTPLSTAAVSSQDTA). A compositionally biased stretch (basic and acidic residues) spans 327–379 (ADERERKERRETRRLEKGRSQDYSDRPEKRDNGRVAEDQKQRKEEEYQTRYRS). The span at 399-410 (MHARVSRARHER) shows a compositional bias: basic residues. Low complexity predominate over residues 421–459 (EAAAAAPAEATAGKRAPATARVSPPESPRARAAAAQPPT). Over residues 460–475 (EHGPPPPRPAPGPAEP) the composition is skewed to pro residues. The span at 476-489 (PEPRVPEPLRKQGR) shows a compositional bias: basic and acidic residues. The segment covering 511-523 (RNDSLSSDQSESV) has biased composition (polar residues). The residue at position 514 (S514) is a Phosphoserine. Residues 529 to 541 (KPHRPKRGGKRRQ) show a composition bias toward basic residues. Residues 559–569 (SCEDVELESES) are compositionally biased toward acidic residues. Phosphoserine is present on S592. In terms of domain architecture, PDZ spans 619-705 (RTTMPKESGA…EPQVEIIVSR (87 aa)). The disordered stretch occupies residues 712–746 (RIPESSHPPLESSSSSFESQKMERPSISVISPTSP). Residues 714-730 (PESSHPPLESSSSSFES) are compositionally biased toward low complexity. Phosphoserine is present on residues S742 and S745. Positions 756–879 (LPGQLSVKLW…ALLDDEPHWY (124 aa)) constitute a C2 1 domain. The disordered stretch occupies residues 884–1201 (HDESSLPLPQ…RQLPQVPVRS (318 aa)). Phosphoserine is present on S895. The segment covering 949–958 (ATTLTVPEQQ) has biased composition (polar residues). S991 carries the post-translational modification Phosphoserine. The segment covering 1006–1023 (RHHDASRSPADHRSRHVE) has biased composition (basic and acidic residues). At S1045 the chain carries Phosphoserine. A compositionally biased stretch (basic and acidic residues) spans 1078–1092 (SPERERHSRKSERCS). Positions 1173–1187 (QGSPTQSPPADTSFG) are enriched in polar residues. A Phosphoserine modification is found at S1175. T1177 carries the phosphothreonine modification. Phosphoserine occurs at positions 1179, 1231, 1233, 1234, 1262, 1263, and 1265. Residues 1256-1313 (DNASAKSSDSDVSDVSAISRASSTSRLSSTSFMSEQSERPRGRISSFTPKMQGRRMGT) are disordered. Residues 1268 to 1289 (SDVSAISRASSTSRLSSTSFMS) show a composition bias toward low complexity. S1339 bears the Phosphoserine mark. The segment at 1368-1397 (RSRSTSQLSQTESGHKKLKSTIQRSTETGM) is disordered. The C2 2 domain maps to 1461–1579 (AMGDIQIGME…DLSSMVIGWY (119 aa)). S1600, S1603, S1606, and S1615 each carry phosphoserine.

In terms of assembly, interacts with RAB3C, RAB10, RAB26 and RAB37. Binds SNAP25, SYT1 and CACNA1B. Interaction with SYT1 is enhanced by calcium ions. Interaction with SNAP25 is weaker in the presence of calcium ions. Binds RAB3A, RAB3B and RAB3D that have been activated by GTP-binding. Binds UNC13A. Interacts with TSPOAP1 and RIMBP2. Interacts with PPFIA3 and PPFIA4. Interacts with ERC1. In terms of processing, phosphorylated by BRSK1. As to expression, highly expressed in hippocampus, brain cortex, cerebellum and olfactory bulb. Detected at lower levels in midbrain, hindbrain and spinal cord. Detected retina and in spinal cord motor neurons.

It localises to the cell membrane. The protein localises to the synapse. Its subcellular location is the presynaptic cell membrane. In terms of biological role, rab effector involved in exocytosis. May act as scaffold protein that regulates neurotransmitter release at the active zone. Essential for maintaining normal probability of neurotransmitter release and for regulating release during short-term synaptic plasticity. Plays a role in dendrite formation by melanocytes. This Rattus norvegicus (Rat) protein is Regulating synaptic membrane exocytosis protein 1 (Rims1).